Consider the following 241-residue polypeptide: Homeobox protein TGIF2LX (241 aa).

2 disordered regions span residues 1-58 (MEAA…GNLP) and 125-207 (KTGK…ELVS). Positions 10–39 (ETQSPVQKDSPAKTQSPAQDTSIMSRNNAD) are enriched in polar residues. The segment at residues 48 to 111 (EHKKKRKGNL…INARRRILPD (64 aa)) is a DNA-binding region (homeobox; TALE-type).

Belongs to the TALE/TGIF homeobox family.

The protein localises to the nucleus. May have a transcription role in testis. The polypeptide is Homeobox protein TGIF2LX (TGIF2LX) (Pan troglodytes (Chimpanzee)).